Reading from the N-terminus, the 477-residue chain is Bifunctional protein HldE (477 aa).

The segment at 1–318 (MKVTLPEFER…ENAVRGRAET (318 aa)) is ribokinase. K179 is subject to N6-acetyllysine. Residue 195 to 198 (NLSE) coordinates ATP. Residue D264 is part of the active site. Residues 344–477 (MTNGVFDILH…IKKIQQDKKG (134 aa)) form a cytidylyltransferase region.

The protein in the N-terminal section; belongs to the carbohydrate kinase PfkB family. This sequence in the C-terminal section; belongs to the cytidylyltransferase family. As to quaternary structure, homodimer.

The enzyme catalyses D-glycero-beta-D-manno-heptose 7-phosphate + ATP = D-glycero-beta-D-manno-heptose 1,7-bisphosphate + ADP + H(+). It catalyses the reaction D-glycero-beta-D-manno-heptose 1-phosphate + ATP + H(+) = ADP-D-glycero-beta-D-manno-heptose + diphosphate. The protein operates within nucleotide-sugar biosynthesis; ADP-L-glycero-beta-D-manno-heptose biosynthesis; ADP-L-glycero-beta-D-manno-heptose from D-glycero-beta-D-manno-heptose 7-phosphate: step 1/4. It participates in nucleotide-sugar biosynthesis; ADP-L-glycero-beta-D-manno-heptose biosynthesis; ADP-L-glycero-beta-D-manno-heptose from D-glycero-beta-D-manno-heptose 7-phosphate: step 3/4. Its function is as follows. Catalyzes the phosphorylation of D-glycero-D-manno-heptose 7-phosphate at the C-1 position to selectively form D-glycero-beta-D-manno-heptose-1,7-bisphosphate. Catalyzes the ADP transfer from ATP to D-glycero-beta-D-manno-heptose 1-phosphate, yielding ADP-D-glycero-beta-D-manno-heptose. This Shigella dysenteriae serotype 1 (strain Sd197) protein is Bifunctional protein HldE.